The following is a 626-amino-acid chain: Chaperone protein HtpG (626 aa).

Residues 1 to 331 (MSETVERHEF…TDDLPLNVSR (331 aa)) form an a; substrate-binding region. The interval 332–544 (EMLQSTPTLQ…GMGPDLQMQR (213 aa)) is b. Residues 545 to 626 (LLRRAGRGFG…GTVAKPAESA (82 aa)) are c.

Belongs to the heat shock protein 90 family. In terms of assembly, homodimer.

It localises to the cytoplasm. Molecular chaperone. Has ATPase activity. This is Chaperone protein HtpG from Methylorubrum populi (strain ATCC BAA-705 / NCIMB 13946 / BJ001) (Methylobacterium populi).